The primary structure comprises 334 residues: Myo-inositol 2-dehydrogenase (334 aa).

Belongs to the Gfo/Idh/MocA family.

It carries out the reaction myo-inositol + NAD(+) = scyllo-inosose + NADH + H(+). Its pathway is polyol metabolism; myo-inositol metabolism. Its function is as follows. Catalyzes the NAD(+)-dependent oxidation of myo-inositol (MI) to 2-keto-myo-inositol (scyllo-inosose), and thus probably functions in a myo-inositol degradation pathway together with IolM, IolN and IolO. Has no activity with scyllo-inositol and much reduced activity (78-fold lower catalytic efficiency) with 1D-chiro-inositol. The polypeptide is Myo-inositol 2-dehydrogenase (Thermotoga maritima (strain ATCC 43589 / DSM 3109 / JCM 10099 / NBRC 100826 / MSB8)).